Reading from the N-terminus, the 315-residue chain is WD repeat domain-containing protein 83 (315 aa).

WD repeat units follow at residues 23–62 (CQQG…LLKT), 65–104 (GHGY…VTRK), 107–146 (GHAG…MEPI), 151–188 (ESQD…LQVD), 189–228 (YIGS…MLGE), 233–272 (VNKG…LTLK), and 275–313 (VGKA…AAEN).

This sequence belongs to the WD repeat MORG1 family.

It localises to the cytoplasm. Functionally, molecular scaffold protein for various multimeric protein complexes. Acts as a module in the assembly of a multicomponent scaffold for the ERK pathway, linking ERK responses to specific agonists. Also involved in response to hypoxia by acting as a negative regulator of HIF1A/HIF-1-alpha. The chain is WD repeat domain-containing protein 83 (wdr83) from Danio rerio (Zebrafish).